Here is a 215-residue protein sequence, read N- to C-terminus: V-type ATP synthase subunit D (215 aa).

Belongs to the V-ATPase D subunit family.

Its function is as follows. Produces ATP from ADP in the presence of a proton gradient across the membrane. In Anaeromyxobacter sp. (strain Fw109-5), this protein is V-type ATP synthase subunit D.